A 151-amino-acid chain; its full sequence is MDRNHAARNSAPLPLSAAHILLPSPSLSSPAPSPQLRSLSCTTSAAATPVPVPHHCLRCCDPPPPPPPPTPSPSISLLPFPFSDGPRLALNPVIPDDHFSSEMDTTTGGALRCRNQHLFLLQPAGQNAGTGPAQKLKTDETRCYERRGGSQ.

The disordered stretch occupies residues 123–151; that stretch reads PAGQNAGTGPAQKLKTDETRCYERRGGSQ. The segment covering 136–151 has biased composition (basic and acidic residues); it reads LKTDETRCYERRGGSQ.

This is an uncharacterized protein from Triticum aestivum (Wheat).